The following is a 490-amino-acid chain: N-succinylglutamate 5-semialdehyde dehydrogenase (490 aa).

An NAD(+)-binding site is contributed by 220 to 225; the sequence is GSANTG. Residues Glu-243 and Cys-277 contribute to the active site.

It belongs to the aldehyde dehydrogenase family. AstD subfamily.

It catalyses the reaction N-succinyl-L-glutamate 5-semialdehyde + NAD(+) + H2O = N-succinyl-L-glutamate + NADH + 2 H(+). It participates in amino-acid degradation; L-arginine degradation via AST pathway; L-glutamate and succinate from L-arginine: step 4/5. Functionally, catalyzes the NAD-dependent reduction of succinylglutamate semialdehyde into succinylglutamate. In Shigella dysenteriae serotype 1 (strain Sd197), this protein is N-succinylglutamate 5-semialdehyde dehydrogenase.